A 395-amino-acid chain; its full sequence is Endophilin-B2 (395 aa).

M1 is subject to N-acetylmethionine. The interval 1–27 (MDFNMKKLASDAGIFFTRAVQFTEEKF) is membrane-binding amphipathic helix. Residue S10 is modified to Phosphoserine. The 264-residue stretch at 24–287 (EEKFGQAEKT…LGRFPGTFVG (264 aa)) folds into the BAR domain. Coiled-coil stretches lie at residues 116–132 (IKVA…ERDF) and 206–240 (ASAL…LLLE). The region spanning 335-395 (SGTRKARVLY…VPVTYLELLS (61 aa)) is the SH3 domain. S395 carries the phosphoserine modification.

This sequence belongs to the endophilin family. As to quaternary structure, homodimer, and heterodimer with SH3GLB1.

Its subcellular location is the cytoplasm. This is Endophilin-B2 (SH3GLB2) from Bos taurus (Bovine).